Consider the following 310-residue polypeptide: GMP synthase [glutamine-hydrolyzing] subunit B (310 aa).

The GMPS ATP-PPase domain maps to 2 to 185; sequence FDPKKFIDEA…LGLPDSIVYR (184 aa). ATP is bound at residue 29–35; sequence SGGVDSS.

As to quaternary structure, heterodimer composed of a glutamine amidotransferase subunit (A) and a GMP-binding subunit (B).

It carries out the reaction XMP + L-glutamine + ATP + H2O = GMP + L-glutamate + AMP + diphosphate + 2 H(+). Its pathway is purine metabolism; GMP biosynthesis; GMP from XMP (L-Gln route): step 1/1. In terms of biological role, catalyzes the synthesis of GMP from XMP. The protein is GMP synthase [glutamine-hydrolyzing] subunit B (guaAB) of Methanocaldococcus jannaschii (strain ATCC 43067 / DSM 2661 / JAL-1 / JCM 10045 / NBRC 100440) (Methanococcus jannaschii).